A 119-amino-acid chain; its full sequence is MARVKGSVATRKRRKRILKLAKGYYGAKHRLFKTAKEQVMNSYYYAFRDRRQKKRDFRKLWIARINAAARMNGLSYSKLMHGLKLADIEVNRKMLADIAIADAAAFTALAEEAKKALAK.

It belongs to the bacterial ribosomal protein bL20 family.

Its function is as follows. Binds directly to 23S ribosomal RNA and is necessary for the in vitro assembly process of the 50S ribosomal subunit. It is not involved in the protein synthesizing functions of that subunit. This is Large ribosomal subunit protein bL20 from Lactococcus lactis subsp. cremoris (strain MG1363).